Here is a 463-residue protein sequence, read N- to C-terminus: Aurantioclavine synthase cnsA (463 aa).

Positions 16–199 (ERFNQRGNVF…TQATVRVFPD (184 aa)) constitute an FAD-binding PCMH-type domain.

The protein belongs to the oxygen-dependent FAD-linked oxidoreductase family. It depends on FAD as a cofactor.

It participates in alkaloid biosynthesis. Functionally, FAD-linked oxidoreductase; part of the gene cluster that mediates the biosynthesis of communesins, a prominent class of indole alkaloids with great potential as pharmaceuticals. Communesins are biosynthesized by the coupling of tryptamine and aurantioclavine, two building blocks derived from L-tryptophan. The L-tryptophan decarboxylase cnsB converts L-tryptophan to tryptamine, whereas the tryptophan dimethylallyltransferase cnsF converts L-tryptophan to 4-dimethylallyl tryptophan which is further transformed to aurantioclavine by the aurantioclavine synthase cnsA, probably aided by the catalase cnsD. The cytochrome P450 monooxygenase cnsC catalyzes the heterodimeric coupling between the two different indole moieties, tryptamine and aurantioclavine, to construct vicinal quaternary stereocenters and yield the heptacyclic communesin scaffold. The O-methyltransferase cnsE then methylates the communesin scaffold to produce communesin K, the simplest characterized communesin that contains the heptacyclic core. The dioxygenase cnsJ converts communesin K into communesin I. Acylation to introduce the hexadienyl group at position N16 of communesin I by the acyltransferase cnsK leads to the production of communesin B. The hexadienyl group is produced by the highly reducing polyketide synthase cnsI, before being hydrolytically removed from cnsI by the serine hydrolase cnsH, converted into hexadienyl-CoA by the CoA ligase cnsG, and then transferred to communesin I by cnsK. Surprisingly, cnsK may also be a promiscuous acyltransferase that can tolerate a range of acyl groups, including acetyl-, propionyl-, and butyryl-CoA, which lead to communesins A, G and H respectively. The roles of the alpha-ketoglutarate-dependent dioxygenases cnsM and cnsP have still to be determined. The polypeptide is Aurantioclavine synthase cnsA (Penicillium expansum (Blue mold rot fungus)).